Reading from the N-terminus, the 247-residue chain is tRNA (guanine-N(7)-)-methyltransferase (247 aa).

S-adenosyl-L-methionine-binding positions include Gly-70, Glu-93–Ile-94, Asn-128–Ala-129, and Leu-148. Asp-151 is an active-site residue. Ser-226–Glu-228 is a binding site for S-adenosyl-L-methionine.

It belongs to the class I-like SAM-binding methyltransferase superfamily. TrmB family.

It is found in the nucleus. The catalysed reaction is guanosine(46) in tRNA + S-adenosyl-L-methionine = N(7)-methylguanosine(46) in tRNA + S-adenosyl-L-homocysteine. The protein operates within tRNA modification; N(7)-methylguanine-tRNA biosynthesis. Functionally, catalyzes the formation of N(7)-methylguanine at position 46 (m7G46) in tRNA. The polypeptide is tRNA (guanine-N(7)-)-methyltransferase (Drosophila virilis (Fruit fly)).